The sequence spans 661 residues: MLYVSNLPVGTSSSAIHALFSAYGNVKDIWMLSPDNSAIVSYESLSSAIVARDALHNRPVFENHGPVQVMLAKPSSNYEPGNITAAVSPPASTSSKDGVVCSPTSTGASQLLKSRVDILEVARQFEMRINLDIVDSMIASAIENNKVATEILPPVETLRSRQFEASKLREIRKNIDSGFYTQEEIEVIARSMLDDVAELSSDYLGNTVVQKFFEYCSDPIKEAMLERIAPYLAAIGIHKNGTWAAQKIIDVASTEKQMDLIVKHLRPYTALLYFDQFGNYVAQCCLRFKYPKNTFLFEVMARHCCEIGQSRFGARAIRACLENENATFEQQALVVASIIINSHLLATNSNGMLLLTWLLDNSFFRNRHRLLAIHLATHLHTTCTHKLASTLIFKLINNKQEPESRNLLLKNLFFSEKDNVLTYILQDQAVGPSFIHKVITYPSIGREFLAQFHLVIKRVLINIHAQPNAVYCRLMEEVGMTSKSISPSLSGISAPSASVDSSASRLARDFGSLSLSSNSLLGSLGGLESTPAYPSYPSHIPLGTASLPLKGNLYQISRSDDIKSGAPVLDTSSLVNPTLAKSASLNNSSLLNPSSSLLRREVPAGKLTMPAYPYTTQLMNHTAGADYGLPRLSSKLPQVFPGNYPRLQQSLFPRQGELRFN.

An RRM domain is found at 1-74 (MLYVSNLPVG…GPVQVMLAKP (74 aa)). Ser102 bears the Phosphoserine mark. The residue at position 104 (Thr104) is a Phosphothreonine. Residue Ser105 is modified to Phosphoserine. One can recognise a PUM-HD domain in the interval 129–482 (INLDIVDSMI…RLMEEVGMTS (354 aa)). 4 Pumilio repeats span residues 191 to 226 (SMLD…AMLE), 227 to 263 (RIAP…LIVK), 264 to 302 (HLRP…VMAR), and 374 to 410 (HLAT…LLLK). 4 positions are modified to phosphoserine: Ser482, Ser486, Ser488, and Ser490.

It is found in the cytoplasm. In Schizosaccharomyces pombe (strain 972 / ATCC 24843) (Fission yeast), this protein is Pumilio domain-containing protein C56F2.08c.